A 380-amino-acid polypeptide reads, in one-letter code: Queuine tRNA-ribosyltransferase (380 aa).

Aspartate 96 functions as the Proton acceptor in the catalytic mechanism. Substrate contacts are provided by residues 96–100, aspartate 150, glutamine 193, and glycine 220; that span reads DSGGF. Positions 251–257 are RNA binding; the sequence is GVGAPDS. The Nucleophile role is filled by aspartate 270. Positions 275 to 279 are RNA binding; important for wobble base 34 recognition; sequence TRIAR. Zn(2+) contacts are provided by cysteine 308, cysteine 310, cysteine 313, and histidine 339.

This sequence belongs to the queuine tRNA-ribosyltransferase family. In terms of assembly, homodimer. Within each dimer, one monomer is responsible for RNA recognition and catalysis, while the other monomer binds to the replacement base PreQ1. It depends on Zn(2+) as a cofactor.

The enzyme catalyses 7-aminomethyl-7-carbaguanine + guanosine(34) in tRNA = 7-aminomethyl-7-carbaguanosine(34) in tRNA + guanine. It participates in tRNA modification; tRNA-queuosine biosynthesis. In terms of biological role, catalyzes the base-exchange of a guanine (G) residue with the queuine precursor 7-aminomethyl-7-deazaguanine (PreQ1) at position 34 (anticodon wobble position) in tRNAs with GU(N) anticodons (tRNA-Asp, -Asn, -His and -Tyr). Catalysis occurs through a double-displacement mechanism. The nucleophile active site attacks the C1' of nucleotide 34 to detach the guanine base from the RNA, forming a covalent enzyme-RNA intermediate. The proton acceptor active site deprotonates the incoming PreQ1, allowing a nucleophilic attack on the C1' of the ribose to form the product. After dissociation, two additional enzymatic reactions on the tRNA convert PreQ1 to queuine (Q), resulting in the hypermodified nucleoside queuosine (7-(((4,5-cis-dihydroxy-2-cyclopenten-1-yl)amino)methyl)-7-deazaguanosine). The chain is Queuine tRNA-ribosyltransferase from Streptococcus pneumoniae (strain Taiwan19F-14).